Reading from the N-terminus, the 198-residue chain is Proteasome subunit beta 2 (198 aa).

Residues 1-4 constitute a propeptide, removed in mature form; by autocatalysis; the sequence is MVLA. The active-site Nucleophile is Thr5.

It belongs to the peptidase T1B family. The 20S proteasome core is composed of 14 alpha and 14 beta subunits that assemble into four stacked heptameric rings, resulting in a barrel-shaped structure. The two inner rings, each composed of seven catalytic beta subunits, are sandwiched by two outer rings, each composed of seven alpha subunits. The catalytic chamber with the active sites is on the inside of the barrel. Has a gated structure, the ends of the cylinder being occluded by the N-termini of the alpha-subunits. Is capped at one or both ends by the proteasome regulatory ATPase, PAN.

It localises to the cytoplasm. It carries out the reaction Cleavage of peptide bonds with very broad specificity.. Its activity is regulated as follows. The formation of the proteasomal ATPase PAN-20S proteasome complex, via the docking of the C-termini of PAN into the intersubunit pockets in the alpha-rings, triggers opening of the gate for substrate entry. Interconversion between the open-gate and close-gate conformations leads to a dynamic regulation of the 20S proteasome proteolysis activity. Component of the proteasome core, a large protease complex with broad specificity involved in protein degradation. The sequence is that of Proteasome subunit beta 2 from Korarchaeum cryptofilum (strain OPF8).